The primary structure comprises 548 residues: Probable bifunctional tRNA threonylcarbamoyladenosine biosynthesis protein (548 aa).

The kae1 stretch occupies residues 1 to 338 (MRILGIEGTA…FRPDEVAVTW (338 aa)). Residues H122 and H126 each contribute to the Fe cation site. L-threonylcarbamoyladenylate contacts are provided by residues 143 to 147 (NASGA), D175, G188, E192, and N271. Residue D299 coordinates Fe cation. Residues 349 to 548 (RMGGDEVQGA…DDIEGRGRYQ (200 aa)) form the Protein kinase domain. ATP contacts are provided by residues 355-362 (VQGAEATV) and K371. The segment covering 390-404 (ERTRQEARLTSEARR) has biased composition (basic and acidic residues). The interval 390 to 413 (ERTRQEARLTSEARRNGVPTPLVR) is disordered. D460 functions as the Proton acceptor; for kinase activity in the catalytic mechanism.

This sequence in the N-terminal section; belongs to the KAE1 / TsaD family. In the C-terminal section; belongs to the protein kinase superfamily. Tyr protein kinase family. BUD32 subfamily. As to quaternary structure, component of the KEOPS complex that consists of Kae1, Bud32, Cgi121 and Pcc1; the whole complex dimerizes. Fe(2+) serves as cofactor.

It localises to the cytoplasm. The catalysed reaction is L-seryl-[protein] + ATP = O-phospho-L-seryl-[protein] + ADP + H(+). It carries out the reaction L-threonyl-[protein] + ATP = O-phospho-L-threonyl-[protein] + ADP + H(+). The enzyme catalyses L-threonylcarbamoyladenylate + adenosine(37) in tRNA = N(6)-L-threonylcarbamoyladenosine(37) in tRNA + AMP + H(+). Its function is as follows. Required for the formation of a threonylcarbamoyl group on adenosine at position 37 (t(6)A37) in tRNAs that read codons beginning with adenine. Is a component of the KEOPS complex that is probably involved in the transfer of the threonylcarbamoyl moiety of threonylcarbamoyl-AMP (TC-AMP) to the N6 group of A37. The Kae1 domain likely plays a direct catalytic role in this reaction. The Bud32 domain probably displays kinase activity that regulates Kae1 function. The protein is Probable bifunctional tRNA threonylcarbamoyladenosine biosynthesis protein of Haloarcula marismortui (strain ATCC 43049 / DSM 3752 / JCM 8966 / VKM B-1809) (Halobacterium marismortui).